The primary structure comprises 493 residues: Alpha-amylase-related protein (493 aa).

An N-terminal signal peptide occupies residues 1–19 (MFKLAFTLTLCLAGSLSLA). Position 20 is a pyrrolidone carboxylic acid (Gln-20). Residues Cys-47 and Cys-103 are joined by a disulfide bond. Ca(2+)-binding residues include Asn-117, Gln-168, and Asp-177. An intrachain disulfide couples Cys-156 to Cys-170. Arg-205 provides a ligand contact to chloride. Catalysis depends on Asp-207, which acts as the Nucleophile. Ca(2+) is bound at residue His-211. Residue Glu-244 is the Proton donor of the active site. Chloride-binding residues include Asn-307 and Arg-342. Disulfide bonds link Cys-375–Cys-381, Cys-417–Cys-440, and Cys-447–Cys-459.

It belongs to the glycosyl hydrolase 13 family. As to quaternary structure, monomer. Ca(2+) is required as a cofactor. It depends on chloride as a cofactor.

It is found in the secreted. The catalysed reaction is Endohydrolysis of (1-&gt;4)-alpha-D-glucosidic linkages in polysaccharides containing three or more (1-&gt;4)-alpha-linked D-glucose units.. This chain is Alpha-amylase-related protein (Amyrel), found in Drosophila orena (Fruit fly).